The primary structure comprises 215 residues: LexA repressor (215 aa).

The H-T-H motif DNA-binding region spans 28 to 48; it reads RAEIAAELGFSSPNAAEEHLR. Catalysis depends on for autocatalytic cleavage activity residues Ser133 and Lys170.

It belongs to the peptidase S24 family. As to quaternary structure, homodimer.

It catalyses the reaction Hydrolysis of Ala-|-Gly bond in repressor LexA.. Its function is as follows. Represses a number of genes involved in the response to DNA damage (SOS response), including recA and lexA. In the presence of single-stranded DNA, RecA interacts with LexA causing an autocatalytic cleavage which disrupts the DNA-binding part of LexA, leading to derepression of the SOS regulon and eventually DNA repair. The polypeptide is LexA repressor (Burkholderia ambifaria (strain ATCC BAA-244 / DSM 16087 / CCUG 44356 / LMG 19182 / AMMD) (Burkholderia cepacia (strain AMMD))).